The following is a 1251-amino-acid chain: Insulin receptor substrate 1 (1251 aa).

Position 3 is a phosphoserine (Ser3). Positions 3-137 (SPPESDGFSD…GAGGGGGSCS (135 aa)) are mediates interaction with PHIP. One can recognise a PH domain in the interval 12–115 (DVRKVGYLRK…WYQALLQLHN (104 aa)). Ser99 carries the post-translational modification Phosphoserine; by CK2. The IRS-type PTB domain maps to 160–264 (FKEVWQVILK…EAMRAMSDEF (105 aa)). Residues 262 to 430 (DEFRPRSKSQ…SDGGFISSDE (169 aa)) are disordered. The segment covering 269–281 (KSQSSSNCSNPIS) has biased composition (low complexity). At Ser270 the chain carries Phosphoserine. Ser307 carries the phosphoserine; by RPS6KB1 modification. Ser312 carries the post-translational modification Phosphoserine; by IKKB, MAPK8 and RPS6KB1. 4 positions are modified to phosphoserine: Ser323, Ser330, Ser345, and Ser348. Residues 354–363 (THAHRHRGSA) are compositionally biased toward basic residues. 2 stretches are compositionally biased toward low complexity: residues 383 to 404 (SPSA…GSTS) and 412 to 424 (SSAS…SDGG). Position 419 is a phosphoserine (Ser419). 2 positions are modified to phosphothreonine: Thr446 and Thr453. Tyr465 is modified (phosphotyrosine; by INSR). The short motif at 465–468 (YICM) is the YXXM motif 1 element. The interval 494–513 (YTPGTGLGTSPALAGDEASS) is disordered. Position 527 is a phosphoserine; by RPS6KB1 (Ser527). The YXXM motif 2 motif lies at 551-554 (YTEM). The span at 594–610 (RRGGHHRPDSSTLHTDD) shows a compositional bias: basic and acidic residues. The segment at 594–616 (RRGGHHRPDSSTLHTDDGYMPMS) is disordered. Tyr612 carries the post-translational modification Phosphotyrosine; by INSR. The short motif at 612–615 (YMPM) is the YXXM motif 3 element. Ser629 carries the post-translational modification Phosphoserine. At Tyr632 the chain carries Phosphotyrosine; by INSR. The YXXM motif 4 signature appears at 632–635 (YMPM). A Phosphoserine; by RPS6KB1 modification is found at Ser636. Residue Tyr662 is modified to Phosphotyrosine. A YXXM motif 5 motif is present at residues 662 to 665 (YMMM). The disordered stretch occupies residues 668-692 (SGGCSPDIGGGPSSSSSSTVPSGSS). The YXXM motif 6 signature appears at 730–733 (YMNM). Disordered regions lie at residues 734-753 (SPVG…GPED) and 769-946 (FKHT…EETG). Residues 774-783 (RPGEPEEGAR) are compositionally biased toward basic and acidic residues. The residue at position 792 (Ser792) is a Phosphoserine; by AMPK and SIK2. Low complexity-rich tracts occupy residues 799 to 813 (AATA…SSDS) and 875 to 891 (QQQQ…QQQQ). Phosphoserine is present on Ser901. Position 905 is a phosphotyrosine; by INSR (Tyr905). The tract at residues 905 to 907 (YVN) is GRB2-binding. Over residues 924-937 (SRSSPSVRCPSQLQ) the composition is skewed to polar residues. Phosphotyrosine; by INSR occurs at positions 950 and 998. Short sequence motifs (YXXM motif) lie at residues 950-953 (YMKM), 998-1001 (YMTM), and 1021-1024 (YADM). Disordered regions lie at residues 1091-1124 (NQSA…RVGN) and 1130-1149 (AGAA…DVKR). Phosphoserine occurs at positions 1109 and 1110. Residues 1111-1123 (ETFSSTPSATRVG) are compositionally biased toward polar residues. At Tyr1188 the chain carries Phosphotyrosine; by INSR. Lys1195 is covalently cross-linked (Glycyl lysine isopeptide (Lys-Gly) (interchain with G-Cter in ubiquitin)). Residues 1195 to 1251 (KDFKQRPQECTPQPQPPPPPPPHQPLGSSESSSTRRSSEDLSAYASISFQKQPEDLQ) form a disordered region. The span at 1207–1218 (QPQPPPPPPPHQ) shows a compositional bias: pro residues. Tyr1238 bears the Phosphotyrosine; by INSR mark.

As to quaternary structure, interacts with UBTF and PIK3CA. Interacts (via phosphorylated YXXM motifs) with PIK3R1. Interacts with ROCK1 and FER. Interacts (via PH domain) with PHIP. Interacts with GRB2. Interacts with SOCS7. Interacts (via IRS-type PTB domain) with IGF1R and INSR (via the tyrosine-phosphorylated NPXY motif). Interacts with ALK. Interacts with EIF2AK2/PKR. Interacts with GKAP1. Interacts with DGKZ in the absence of insulin; insulin stimulation decreases this interaction. Found in a ternary complex with DGKZ and PIP5K1A in the absence of insulin stimulation. Interacts with SQSTM1; the interaction is disrupted by the presence of tensin TNS2. Interacts with NCK1 (via SH2 domain). Interacts with NCK2 (via SH3 domain). Interacts with SH2B1; this interaction enhances leptin-induced activation of the PI3-kinase pathway. Interacts with DVL2; this interaction promotes the Wnt/beta-catenin signaling pathway. Interacts with JAK1. In terms of processing, serine phosphorylation of IRS1 is a mechanism for insulin resistance. Ser-312 phosphorylation inhibits insulin action through disruption of IRS1 interaction with the insulin receptor. Phosphorylation of Tyr-905 is required for GRB2-binding. Phosphorylated by ALK. Phosphorylated at Ser-270, Ser-307, Ser-636 and Ser-1109 by RPS6KB1; phosphorylation induces accelerated degradation of IRS1. Phosphorylated on tyrosine residues in response to insulin. In skeletal muscles, dephosphorylated on Tyr-612 by TNS2 under anabolic conditions; dephosphorylation results in the proteasomal degradation of IRS1. Post-translationally, ubiquitinated by the Cul7-RING(FBXW8) complex in a mTOR-dependent manner, leading to its degradation: the Cul7-RING(FBXW8) complex recognizes and binds IRS1 previously phosphorylated by S6 kinase (RPS6KB1 or RPS6KB2). Ubiquitinated by TRAF4 through 'Lys-29' linkage; this ubiquitination regulates the interaction of IRS1 with IGFR and IRS1 tyrosine phosphorylation upon IGF1 stimulation. S-nitrosylation at by BLVRB inhibits its activity.

The protein resides in the cytoplasm. It is found in the nucleus. Its function is as follows. Signaling adapter protein that participates in the signal transduction from two prominent receptor tyrosine kinases, insulin receptor/INSR and insulin-like growth factor I receptor/IGF1R. Plays therefore an important role in development, growth, glucose homeostasis as well as lipid metabolism. Upon phosphorylation by the insulin receptor, functions as a signaling scaffold that propagates insulin action through binding to SH2 domain-containing proteins including the p85 regulatory subunit of PI3K, NCK1, NCK2, GRB2 or SHP2. Recruitment of GRB2 leads to the activation of the guanine nucleotide exchange factor SOS1 which in turn triggers the Ras/Raf/MEK/MAPK signaling cascade. Activation of the PI3K/AKT pathway is responsible for most of insulin metabolic effects in the cell, and the Ras/Raf/MEK/MAPK is involved in the regulation of gene expression and in cooperation with the PI3K pathway regulates cell growth and differentiation. Acts a positive regulator of the Wnt/beta-catenin signaling pathway through suppression of DVL2 autophagy-mediated degradation leading to cell proliferation. The polypeptide is Insulin receptor substrate 1 (IRS1) (Chlorocebus aethiops (Green monkey)).